The primary structure comprises 338 residues: Ferrochelatase (338 aa).

The Fe cation site is built by H202 and E283.

It belongs to the ferrochelatase family.

It localises to the cytoplasm. It carries out the reaction heme b + 2 H(+) = protoporphyrin IX + Fe(2+). Its pathway is porphyrin-containing compound metabolism; protoheme biosynthesis; protoheme from protoporphyrin-IX: step 1/1. Catalyzes the ferrous insertion into protoporphyrin IX. The polypeptide is Ferrochelatase (Acinetobacter baumannii (strain AB307-0294)).